The chain runs to 364 residues: MNIKQLGWNAHFESHFENYRGQDLVPARVIRVGGGFYTLLGADGEQTATLAGQLRHGSTQDALPAVGDWVGIDSPQEGGIRIHAILPRQTALKRATVSNRKGLVEKPGVPQVLAANVDIAIIVCGLNRDYNPRRIERYLTLVHESGAMPLIVLNKSDICPETQARRAEIESIAFGTPVLVTSAQCGDGLDELASHLKAGSTLVLIGSSGAGKSTLLNRLACAEHQQTSEISAAVGKGMHTTTHRELFPLPGGALVIDTPGLRELHLWGESEAGLASTFPEVIGFAAQCRFSDCQHDQEPDCGIRQALHDGTLDPARLESYLKQRAEIASATLQSELAAQVAQKRKRKTIPRQGKRWRREHGDGQ.

The region spanning 101–264 is the CP-type G domain; sequence KGLVEKPGVP…VIDTPGLREL (164 aa). Residues 154–157 and 206–214 contribute to the GTP site; these read NKSD and GSSGAGKST. Zn(2+) contacts are provided by Cys-288, Cys-293, His-295, and Cys-301. The disordered stretch occupies residues 339–364; that stretch reads QVAQKRKRKTIPRQGKRWRREHGDGQ. Positions 342–358 are enriched in basic residues; that stretch reads QKRKRKTIPRQGKRWRR.

Belongs to the TRAFAC class YlqF/YawG GTPase family. RsgA subfamily. In terms of assembly, monomer. Associates with 30S ribosomal subunit, binds 16S rRNA. Requires Zn(2+) as cofactor.

The protein resides in the cytoplasm. Its function is as follows. One of several proteins that assist in the late maturation steps of the functional core of the 30S ribosomal subunit. Helps release RbfA from mature subunits. May play a role in the assembly of ribosomal proteins into the subunit. Circularly permuted GTPase that catalyzes slow GTP hydrolysis, GTPase activity is stimulated by the 30S ribosomal subunit. This is Small ribosomal subunit biogenesis GTPase RsgA from Syntrophotalea carbinolica (strain DSM 2380 / NBRC 103641 / GraBd1) (Pelobacter carbinolicus).